Here is a 508-residue protein sequence, read N- to C-terminus: Photosystem II CP47 reaction center protein (508 aa).

The next 6 membrane-spanning stretches (helical) occupy residues 21–36, 101–115, 140–156, 203–218, 237–252, and 457–472; these read SVHI…WAGS, IVFS…IWHW, GIHL…FGAF, IAAG…FHLS, VLSS…AFVV, and SFAL…HGSR.

The protein belongs to the PsbB/PsbC family. PsbB subfamily. As to quaternary structure, PSII is composed of 1 copy each of membrane proteins PsbA, PsbB, PsbC, PsbD, PsbE, PsbF, PsbH, PsbI, PsbJ, PsbK, PsbL, PsbM, PsbT, PsbX, PsbY, PsbZ, Psb30/Ycf12, at least 3 peripheral proteins of the oxygen-evolving complex and a large number of cofactors. It forms dimeric complexes. The cofactor is Binds multiple chlorophylls. PSII binds additional chlorophylls, carotenoids and specific lipids..

It localises to the plastid. The protein resides in the chloroplast thylakoid membrane. Functionally, one of the components of the core complex of photosystem II (PSII). It binds chlorophyll and helps catalyze the primary light-induced photochemical processes of PSII. PSII is a light-driven water:plastoquinone oxidoreductase, using light energy to abstract electrons from H(2)O, generating O(2) and a proton gradient subsequently used for ATP formation. This chain is Photosystem II CP47 reaction center protein, found in Fagopyrum esculentum subsp. ancestrale (Wild buckwheat).